Consider the following 159-residue polypeptide: Capsid protein (159 aa).

This sequence belongs to the virgaviridae capsid protein family.

It localises to the virion. Functionally, capsid protein self-assembles to form rod-shaped virions about 18 nm in diameter with a central canal enclosing the viral genomic RNA. The polypeptide is Capsid protein (CP) (Tomato mosaic virus (strain Kazakh K1) (ToMV)).